A 242-amino-acid chain; its full sequence is Type III pantothenate kinase (242 aa).

ATP is bound at residue aspartate 6 to lysine 13. Residues tyrosine 86 and glycine 93–arginine 96 each bind substrate. Residue aspartate 95 is the Proton acceptor of the active site. K(+) is bound at residue aspartate 116. Threonine 119 contributes to the ATP binding site. Threonine 171 lines the substrate pocket.

Belongs to the type III pantothenate kinase family. As to quaternary structure, homodimer. The cofactor is NH4(+). K(+) is required as a cofactor.

It localises to the cytoplasm. The catalysed reaction is (R)-pantothenate + ATP = (R)-4'-phosphopantothenate + ADP + H(+). It functions in the pathway cofactor biosynthesis; coenzyme A biosynthesis; CoA from (R)-pantothenate: step 1/5. Catalyzes the phosphorylation of pantothenate (Pan), the first step in CoA biosynthesis. This Phocaeicola vulgatus (strain ATCC 8482 / DSM 1447 / JCM 5826 / CCUG 4940 / NBRC 14291 / NCTC 11154) (Bacteroides vulgatus) protein is Type III pantothenate kinase.